The chain runs to 442 residues: Pyruvate dehydrogenase complex protein X component, mitochondrial (442 aa).

A mitochondrion-targeting transit peptide spans 1–35; it reads MASLAAACRVSARLAARKLQHDAAVRGFRSSAAAL. The Lipoyl-binding domain occupies 37-113; the sequence is AQNFMMPALS…QVGTRIAVVA (77 aa). K78 carries the N6-lipoyllysine modification. The segment at 119 to 169 is disordered; sequence ITKLEIPPDEGPQQLKAAAPAPAPTPAPAPASPQPQFAAPTPSPPKASTKV. Residues 139-151 show a composition bias toward pro residues; the sequence is APAPTPAPAPASP. Residues 152–169 show a composition bias toward low complexity; that stretch reads QPQFAAPTPSPPKASTKV. Residues 175-215 enclose the Peripheral subunit-binding (PSBD) domain; that stretch reads PLLPSVHQLIKENGLDESAVSNITPTGPGGRILKGDVLAYL. Residues 244–269 are disordered; it reads AKPVEPEKPQEEKASAPAPAPRAPEP. Residues 245–257 show a composition bias toward basic and acidic residues; the sequence is KPVEPEKPQEEKA. The interval 317–336 is interaction to the E2 core; the sequence is PLPTNYQPTADELFDQVLGL.

The protein belongs to the 2-oxoacid dehydrogenase family. In terms of assembly, eukaryotic pyruvate dehydrogenase (PDH) complexes are organized as a core consisting of the oligomeric dihydrolipoamide acetyl-transferase (E2), around which are arranged multiple copies of pyruvate dehydrogenase (E1), dihydrolipoamide dehydrogenase (E3) and protein X (E3BP) bound by non-covalent bonds. The Chaetomium thermophilum PDH complex contains 60 E2 units, 12 E3BP units, about 20 E1 units, and 12 or more E3 units. The units are organized in 1 E2 60-mer, 4 E3BP trimers, about 20 E1 tetramers, and a maximum of 12 E3 dimers. The E3BP trimers are bound inside the icosahedral core with tetrahedral symmetry.

The protein resides in the mitochondrion. Its function is as follows. The 10-megadalton pyruvate dehydrogenase complex contains multiple copies of three enzymatic components: pyruvate dehydrogenase (E1), dihydrolipoamide acetyltransferase (E2) and lipoamide dehydrogenase (E3) and catalyzes the overall oxidative decarboxylation of pyruvate to form acetyl-CoA and CO(2). E3BP is responsible for tethering E3 in proximity to the core, forming the entire metabolon, and the number of E3s is limited by the number of E3BPs. Within the complex, pyruvate and thiamine pyrophosphate (TPP or vitamin B1) are bound by pyruvate dehydrogenase E1 subunits alpha and beta and pyruvate is decarboxylated leading to the 2-carbon hydrohyethyl bound to TPP. The E2 component contains covalently-bound lipoyl cofactors and transfers the hydroxyethyl group from TPP to an oxidized form of covalently bound lipoamide, and the resulting acetyl group is then transferred to free coenzyme A to form acetyl-CoA and reduced dihydrolipoamide-E2. Finally, the flavoprotein dihydrolipoamide dehydrogenase (E3) re-oxidizes the lipoyl group of dihydrolipoamide-E2 to form lipoamide-E2 and NADH. A fourth subunit, E3BP, is responsible for tethering E3 in proximity to the core, forming the entire metabolon. This Chaetomium thermophilum (strain DSM 1495 / CBS 144.50 / IMI 039719) (Thermochaetoides thermophila) protein is Pyruvate dehydrogenase complex protein X component, mitochondrial.